The following is a 590-amino-acid chain: Beta-(1--&gt;2)glucan export ATP-binding/permease protein NdvA (590 aa).

The region spanning 21 to 301 is the ABC transmembrane type-1 domain; that stretch reads VALICGANVA…MSAFANQISE (281 aa). A run of 6 helical transmembrane segments spans residues 22–42, 55–75, 136–156, 158–178, 248–268, and 275–295; these read ALICGANVALAAIAILEPIMF, VFSTLAVWAGLGAFNVIAFVL, QHLSTAVALVLLVPTALSMDV, MSMVLLGLGVLYVGIGRLVMK, LSSTISMMVVLLIGAYLVTHG, and VIAFTGFATLLISRLDQMSAF. The region spanning 335 to 569 is the ABC transporter domain; it reads VRFEDVGFEF…NGRFASLLRA (235 aa). 368 to 375 contributes to the ATP binding site; sequence GPTGAGKT.

Belongs to the ABC transporter superfamily. Beta-(1--&gt;2)glucan exporter (TC 3.A.1.108.1) family. In terms of assembly, homodimer.

It is found in the cell inner membrane. The enzyme catalyses [(1-&gt;2)-beta-D-glucosyl](n)(in) + ATP + H2O = [(1-&gt;2)-beta-D-glucosyl](n)(out) + ADP + phosphate + H(+). Its function is as follows. Involved in beta-(1--&gt;2)glucan export. Transmembrane domains (TMD) form a pore in the inner membrane and the ATP-binding domain (NBD) is responsible for energy generation. This is Beta-(1--&gt;2)glucan export ATP-binding/permease protein NdvA from Mesorhizobium japonicum (strain LMG 29417 / CECT 9101 / MAFF 303099) (Mesorhizobium loti (strain MAFF 303099)).